A 149-amino-acid polypeptide reads, in one-letter code: Calmodulin (149 aa).

4 EF-hand domains span residues 8 to 43, 44 to 79, 81 to 116, and 117 to 149; these read EQIAEFKEAFSLFDKDGDGNITTKELGTVMRSLGQN, PTEAELQDMINEVDADGNGTIDFPEFLTMMARKMAD, DTEEEIREAFKVFDKDGNGFISAAELRHVMTNLGEK, and LSDEEVDEMIREADVDGDGQVNYDEFVKMMLSK. Ca(2+) contacts are provided by Asp-21, Asp-23, Asp-25, Asn-27, Glu-32, Asp-57, Asp-59, Asn-61, Thr-63, Glu-68, Asp-94, Asp-96, Asn-98, and Glu-105. Lys-116 bears the N6,N6,N6-trimethyllysine mark. Residues Asp-130, Asp-132, Asp-134, Gln-136, and Glu-141 each coordinate Ca(2+).

It belongs to the calmodulin family.

Calmodulin mediates the control of a large number of enzymes, ion channels and other proteins by Ca(2+). Among the enzymes to be stimulated by the calmodulin-Ca(2+) complex are a number of protein kinases and phosphatases. The protein is Calmodulin of Physarum polycephalum (Slime mold).